Reading from the N-terminus, the 98-residue chain is Large ribosomal subunit protein uL23 (98 aa).

The protein belongs to the universal ribosomal protein uL23 family. In terms of assembly, part of the 50S ribosomal subunit. Contacts protein L29, and trigger factor when it is bound to the ribosome.

Functionally, one of the early assembly proteins it binds 23S rRNA. One of the proteins that surrounds the polypeptide exit tunnel on the outside of the ribosome. Forms the main docking site for trigger factor binding to the ribosome. This Hahella chejuensis (strain KCTC 2396) protein is Large ribosomal subunit protein uL23.